We begin with the raw amino-acid sequence, 98 residues long: NADH-ubiquinone oxidoreductase chain 4L (98 aa).

The next 3 membrane-spanning stretches (helical) occupy residues 1 to 21 (MSMVYFNILMAFIVSFVGLLM), 29 to 49 (SLLCLEGMMLSLFVMMSVTIL), and 61 to 81 (IILLVFAACEAALGLSLLVMV).

Belongs to the complex I subunit 4L family. As to quaternary structure, core subunit of respiratory chain NADH dehydrogenase (Complex I) which is composed of 45 different subunits.

The protein resides in the mitochondrion inner membrane. The catalysed reaction is a ubiquinone + NADH + 5 H(+)(in) = a ubiquinol + NAD(+) + 4 H(+)(out). In terms of biological role, core subunit of the mitochondrial membrane respiratory chain NADH dehydrogenase (Complex I) which catalyzes electron transfer from NADH through the respiratory chain, using ubiquinone as an electron acceptor. Part of the enzyme membrane arm which is embedded in the lipid bilayer and involved in proton translocation. This Eumetopias jubatus (Steller sea lion) protein is NADH-ubiquinone oxidoreductase chain 4L (MT-ND4L).